The chain runs to 680 residues: Cytosolic endo-beta-N-acetylglucosaminidase 1 (680 aa).

The segment covering 1 to 15 (MSVAPPAPSPPPFDP) has biased composition (pro residues). The segment at 1 to 21 (MSVAPPAPSPPPFDPTKPSTP) is disordered.

The protein belongs to the glycosyl hydrolase 85 family.

It is found in the cytoplasm. The protein resides in the cytosol. It catalyses the reaction an N(4)-(oligosaccharide-(1-&gt;3)-[oligosaccharide-(1-&gt;6)]-beta-D-Man-(1-&gt;4)-beta-D-GlcNAc-(1-&gt;4)-alpha-D-GlcNAc)-L-asparaginyl-[protein] + H2O = an oligosaccharide-(1-&gt;3)-[oligosaccharide-(1-&gt;6)]-beta-D-Man-(1-&gt;4)-D-GlcNAc + N(4)-(N-acetyl-beta-D-glucosaminyl)-L-asparaginyl-[protein]. Its function is as follows. Endoglycosidase that releases N-glycans from glycoproteins by cleaving the beta-1,4-glycosidic bond in the N,N'-diacetylchitobiose core. Involved in the production of high-mannose type N-glycans during plant development and fruit maturation. The polypeptide is Cytosolic endo-beta-N-acetylglucosaminidase 1 (Arabidopsis thaliana (Mouse-ear cress)).